The sequence spans 335 residues: uncharacterized protein (335 aa).

The signal sequence occupies residues 1–21; it reads MDKKARAHTVIVCLVGALSLA. C22 carries the N-palmitoyl cysteine lipid modification. C22 carries the S-diacylglycerol cysteine lipid modification.

It localises to the cell membrane. This is an uncharacterized protein from Treponema pallidum (strain Nichols).